The sequence spans 436 residues: Na(+)/H(+) antiporter NhaA 1 (436 aa).

11 helical membrane-spanning segments follow: residues 35–55 (FGGG…NSPW), 80–100 (LATW…GLEL), 116–136 (ALPV…YVGV), 147–167 (GWAI…AVIG), 176–196 (AFLL…IAIF), 201–221 (FKLT…LLVQ), 226–246 (WWWA…ESGV), 283–303 (VSAG…SLRG), 313–333 (PIVV…IFGS), 354–374 (LLGV…IGEL), and 385–405 (VKAA…IVLI).

The protein belongs to the NhaA Na(+)/H(+) (TC 2.A.33) antiporter family.

It is found in the cell membrane. It carries out the reaction Na(+)(in) + 2 H(+)(out) = Na(+)(out) + 2 H(+)(in). Its function is as follows. Na(+)/H(+) antiporter that extrudes sodium in exchange for external protons. The sequence is that of Na(+)/H(+) antiporter NhaA 1 from Salinispora tropica (strain ATCC BAA-916 / DSM 44818 / JCM 13857 / NBRC 105044 / CNB-440).